The following is a 423-amino-acid chain: Protein CLP1 homolog (423 aa).

ATP is bound by residues Glu-16, Lys-57, and 119 to 124 (DVGKST).

Belongs to the Clp1 family. Clp1 subfamily.

The protein localises to the nucleus. Its function is as follows. Required for endonucleolytic cleavage during polyadenylation-dependent pre-mRNA 3'-end formation. The chain is Protein CLP1 homolog (cbc) from Drosophila melanogaster (Fruit fly).